We begin with the raw amino-acid sequence, 120 residues long: NAD(P)H-quinone oxidoreductase subunit 3, organellar chromatophore (120 aa).

3 consecutive transmembrane segments (helical) span residues 6–26 (GYDA…LALL), 64–84 (MFAL…PWAV), and 89–109 (LGLL…IALA).

Belongs to the complex I subunit 3 family. In terms of assembly, NDH is composed of at least 16 different subunits, 5 of which are encoded in the nucleus.

It localises to the plastid. The protein resides in the organellar chromatophore thylakoid membrane. It carries out the reaction a plastoquinone + NADH + (n+1) H(+)(in) = a plastoquinol + NAD(+) + n H(+)(out). It catalyses the reaction a plastoquinone + NADPH + (n+1) H(+)(in) = a plastoquinol + NADP(+) + n H(+)(out). NDH shuttles electrons from NAD(P)H:plastoquinone, via FMN and iron-sulfur (Fe-S) centers, to quinones in the photosynthetic chain and possibly in a chloroplast respiratory chain. The immediate electron acceptor for the enzyme in this species is believed to be plastoquinone. Couples the redox reaction to proton translocation, and thus conserves the redox energy in a proton gradient. This Paulinella chromatophora protein is NAD(P)H-quinone oxidoreductase subunit 3, organellar chromatophore.